A 173-amino-acid polypeptide reads, in one-letter code: Crossover junction endodeoxyribonuclease RuvC (173 aa).

Residues D8, E67, and D139 contribute to the active site. Residues D8, E67, and D139 each contribute to the Mg(2+) site.

Belongs to the RuvC family. Homodimer which binds Holliday junction (HJ) DNA. The HJ becomes 2-fold symmetrical on binding to RuvC with unstacked arms; it has a different conformation from HJ DNA in complex with RuvA. In the full resolvosome a probable DNA-RuvA(4)-RuvB(12)-RuvC(2) complex forms which resolves the HJ. Mg(2+) is required as a cofactor.

The protein resides in the cytoplasm. It carries out the reaction Endonucleolytic cleavage at a junction such as a reciprocal single-stranded crossover between two homologous DNA duplexes (Holliday junction).. In terms of biological role, the RuvA-RuvB-RuvC complex processes Holliday junction (HJ) DNA during genetic recombination and DNA repair. Endonuclease that resolves HJ intermediates. Cleaves cruciform DNA by making single-stranded nicks across the HJ at symmetrical positions within the homologous arms, yielding a 5'-phosphate and a 3'-hydroxyl group; requires a central core of homology in the junction. The consensus cleavage sequence is 5'-(A/T)TT(C/G)-3'. Cleavage occurs on the 3'-side of the TT dinucleotide at the point of strand exchange. HJ branch migration catalyzed by RuvA-RuvB allows RuvC to scan DNA until it finds its consensus sequence, where it cleaves and resolves the cruciform DNA. This Pectobacterium carotovorum subsp. carotovorum (strain PC1) protein is Crossover junction endodeoxyribonuclease RuvC.